The chain runs to 170 residues: Peptide deformylase (170 aa).

Positions 94 and 136 each coordinate Fe cation. Residue E137 is part of the active site. H140 provides a ligand contact to Fe cation.

This sequence belongs to the polypeptide deformylase family. Fe(2+) is required as a cofactor.

The enzyme catalyses N-terminal N-formyl-L-methionyl-[peptide] + H2O = N-terminal L-methionyl-[peptide] + formate. Its function is as follows. Removes the formyl group from the N-terminal Met of newly synthesized proteins. Requires at least a dipeptide for an efficient rate of reaction. N-terminal L-methionine is a prerequisite for activity but the enzyme has broad specificity at other positions. The chain is Peptide deformylase from Agrobacterium fabrum (strain C58 / ATCC 33970) (Agrobacterium tumefaciens (strain C58)).